The chain runs to 254 residues: Ribosomal RNA small subunit methyltransferase G (254 aa).

S-adenosyl-L-methionine-binding positions include Gly92, Ala143–Glu144, and Arg156.

It belongs to the methyltransferase superfamily. RNA methyltransferase RsmG family.

It localises to the cytoplasm. Specifically methylates the N7 position of a guanine in 16S rRNA. The chain is Ribosomal RNA small subunit methyltransferase G from Leptospira interrogans serogroup Icterohaemorrhagiae serovar copenhageni (strain Fiocruz L1-130).